Consider the following 644-residue polypeptide: 3D-(3,5/4)-trihydroxycyclohexane-1,2-dione hydrolase 2 (644 aa).

Glu65 provides a ligand contact to thiamine diphosphate. A thiamine pyrophosphate binding region spans residues 442–522 (SLPGDLQRMW…INVLLFDNSG (81 aa)). 2 residues coordinate Mg(2+): Asp493 and Asn520.

It belongs to the TPP enzyme family. Mg(2+) is required as a cofactor. Thiamine diphosphate serves as cofactor.

The catalysed reaction is 3D-3,5/4-trihydroxycyclohexane-1,2-dione + H2O = 5-deoxy-D-glucuronate + H(+). It participates in polyol metabolism; myo-inositol degradation into acetyl-CoA; acetyl-CoA from myo-inositol: step 3/7. In terms of biological role, involved in the cleavage of the C1-C2 bond of 3D-(3,5/4)-trihydroxycyclohexane-1,2-dione (THcHDO) to yield 5-deoxy-glucuronate (5DG). The chain is 3D-(3,5/4)-trihydroxycyclohexane-1,2-dione hydrolase 2 from Bacillus cereus (strain ZK / E33L).